We begin with the raw amino-acid sequence, 84 residues long: Large ribosomal subunit protein bL27 (84 aa).

Belongs to the bacterial ribosomal protein bL27 family.

This is Large ribosomal subunit protein bL27 from Buchnera aphidicola subsp. Schizaphis graminum (strain Sg).